The primary structure comprises 355 residues: Uroporphyrinogen decarboxylase (355 aa).

Substrate contacts are provided by residues 27 to 31, Asp78, Tyr155, Ser210, and His328; that span reads RQAGR.

It belongs to the uroporphyrinogen decarboxylase family. In terms of assembly, homodimer.

The protein resides in the cytoplasm. The catalysed reaction is uroporphyrinogen III + 4 H(+) = coproporphyrinogen III + 4 CO2. The protein operates within porphyrin-containing compound metabolism; protoporphyrin-IX biosynthesis; coproporphyrinogen-III from 5-aminolevulinate: step 4/4. Functionally, catalyzes the decarboxylation of four acetate groups of uroporphyrinogen-III to yield coproporphyrinogen-III. The chain is Uroporphyrinogen decarboxylase from Pseudomonas aeruginosa (strain UCBPP-PA14).